A 246-amino-acid polypeptide reads, in one-letter code: NLP effector protein Pc118548 (246 aa).

An N-terminal signal peptide occupies residues 1 to 19 (MNFRAFLLAAIAGIATINA). The Hepta-peptide GHRHDWE motif signature appears at 122–128 (GHRHYWE). N-linked (GlcNAc...) asparagine glycosylation is present at N141.

The protein belongs to the Necrosis inducing protein (NPP1) family.

The protein localises to the secreted. Functionally, secreted effector that contributes strongly to virulence during infection by P.capsici. Induces cell death in the Solanaceae, including Nicotiana benthamiana and hot pepper. The chain is NLP effector protein Pc118548 from Phytophthora capsici.